The primary structure comprises 470 residues: MGIGRVTQVMGPVIDVRFEHNEVPKINNALVIDVPKEEGTIQLTLEVALQLGDDVVRTIAMDSTDGVQRGMDVKDTGKEISVPVGDETLGRVFNVLGETIDLKEEISDSVRRDPIHRQAPAFDELSTEVQILETGIKVVDLLAPYIKGGKIGLFGGAGVGKTVLIQELINNIAQEHGGISVFAGVGERTREGNDLYFEMSDSGVIKKTAMVFGQMNEPPGARMRVALSGLTMAEYFRDEQGQDVLLFIDNIFRFTQAGSEVSALLGRMPSAVGYQPTLATEMGQLQERITSTTKGSVTSIQAVFVPADDYTDPAPATAFAHLDATTNLERKLTEMGIYPAVDPLASTSRALEPSIVGQEHYEVARDVQSTLQKYRELQDIIAILGMDELSDEDKQTVERARRIQFFLSQNFHVAEQFTGQKGSYVPVKTTVANFKDILDGKYDHIPEDAFRLVGSMDDVIAKAKDMGVEV.

155–162 (GGAGVGKT) contributes to the ATP binding site.

This sequence belongs to the ATPase alpha/beta chains family. F-type ATPases have 2 components, CF(1) - the catalytic core - and CF(0) - the membrane proton channel. CF(1) has five subunits: alpha(3), beta(3), gamma(1), delta(1), epsilon(1). CF(0) has three main subunits: a(1), b(2) and c(9-12). The alpha and beta chains form an alternating ring which encloses part of the gamma chain. CF(1) is attached to CF(0) by a central stalk formed by the gamma and epsilon chains, while a peripheral stalk is formed by the delta and b chains.

Its subcellular location is the cell membrane. It carries out the reaction ATP + H2O + 4 H(+)(in) = ADP + phosphate + 5 H(+)(out). In terms of biological role, produces ATP from ADP in the presence of a proton gradient across the membrane. The catalytic sites are hosted primarily by the beta subunits. The protein is ATP synthase subunit beta of Staphylococcus aureus (strain MW2).